Consider the following 465-residue polypeptide: Trigger factor (465 aa).

The region spanning 163-248 (GDVINFNFKG…INKIKENQPA (86 aa)) is the PPIase FKBP-type domain. The tract at residues 431–465 (EIVNKNQNDNEIEQDKEQKDNNEEKIKQENNLENK) is disordered. A compositionally biased stretch (basic and acidic residues) spans 443–465 (EQDKEQKDNNEEKIKQENNLENK).

It belongs to the FKBP-type PPIase family. Tig subfamily.

The protein resides in the cytoplasm. It carries out the reaction [protein]-peptidylproline (omega=180) = [protein]-peptidylproline (omega=0). Its function is as follows. Involved in protein export. Acts as a chaperone by maintaining the newly synthesized protein in an open conformation. Functions as a peptidyl-prolyl cis-trans isomerase. This Mesomycoplasma hyopneumoniae (strain J / ATCC 25934 / NCTC 10110) (Mycoplasma hyopneumoniae) protein is Trigger factor.